The sequence spans 85 residues: Major outer membrane protein 1 (85 aa).

The first 18 residues, 1 to 18 (MEAREVEEMRRSRLLTLG), serve as a signal peptide directing secretion. The chain crosses the membrane as a helical span at residues 22 to 42 (YTAVIALAALVLVMGALGLVL).

Forms extremely stable complexes with apparent masses of 150, 50, 45 and 38 kDa. Found in a ring-shaped complex of 7 nm diameter with a 2 nm channel through the middle. Complete denaturation requires temperatures over 110 degrees Celsius.

It localises to the cell outer membrane. Its function is as follows. The most abundant protein of the outer membrane, it forms a pore through it. This is Major outer membrane protein 1 (ihomp1) from Ignicoccus hospitalis (strain KIN4/I / DSM 18386 / JCM 14125).